The following is a 1009-amino-acid chain: Probable beta-galactosidase B (1009 aa).

The first 27 residues, 1 to 27 (MKTIAGLSWISALSSLASLPNGLGVSA), serve as a signal peptide directing secretion. Position 96 (Tyr96) interacts with substrate. A glycan (N-linked (GlcNAc...) asparagine) is linked at Asn106. 4 residues coordinate substrate: Asn141, Ala142, Glu143, and Asn201. Catalysis depends on Glu202, which acts as the Proton donor. Tyr271 lines the substrate pocket. Cys277 and Cys330 are joined by a disulfide. Glu314 functions as the Nucleophile in the catalytic mechanism. Tyr379 is a binding site for substrate. 12 N-linked (GlcNAc...) asparagine glycosylation sites follow: Asn467, Asn495, Asn547, Asn593, Asn632, Asn672, Asn707, Asn775, Asn782, Asn789, Asn795, and Asn914.

This sequence belongs to the glycosyl hydrolase 35 family.

The protein resides in the secreted. It catalyses the reaction Hydrolysis of terminal non-reducing beta-D-galactose residues in beta-D-galactosides.. In terms of biological role, cleaves beta-linked terminal galactosyl residues from gangliosides, glycoproteins, and glycosaminoglycans. The chain is Probable beta-galactosidase B (lacB) from Pyrenophora tritici-repentis (strain Pt-1C-BFP) (Wheat tan spot fungus).